We begin with the raw amino-acid sequence, 235 residues long: 1-(5-phosphoribosyl)-5-[(5-phosphoribosylamino)methylideneamino] imidazole-4-carboxamide isomerase (235 aa).

The Proton acceptor role is filled by D8. D128 serves as the catalytic Proton donor.

It belongs to the HisA/HisF family.

Its subcellular location is the cytoplasm. The enzyme catalyses 1-(5-phospho-beta-D-ribosyl)-5-[(5-phospho-beta-D-ribosylamino)methylideneamino]imidazole-4-carboxamide = 5-[(5-phospho-1-deoxy-D-ribulos-1-ylimino)methylamino]-1-(5-phospho-beta-D-ribosyl)imidazole-4-carboxamide. The protein operates within amino-acid biosynthesis; L-histidine biosynthesis; L-histidine from 5-phospho-alpha-D-ribose 1-diphosphate: step 4/9. This is 1-(5-phosphoribosyl)-5-[(5-phosphoribosylamino)methylideneamino] imidazole-4-carboxamide isomerase from Thermus thermophilus (strain ATCC BAA-163 / DSM 7039 / HB27).